We begin with the raw amino-acid sequence, 337 residues long: RNA 3'-terminal phosphate cyclase (337 aa).

ATP-binding positions include Gln101 and His282–Asp285. The active-site Tele-AMP-histidine intermediate is His306.

It belongs to the RNA 3'-terminal cyclase family. Type 1 subfamily.

Its subcellular location is the cytoplasm. The enzyme catalyses a 3'-end 3'-phospho-ribonucleotide-RNA + ATP = a 3'-end 2',3'-cyclophospho-ribonucleotide-RNA + AMP + diphosphate. Catalyzes the conversion of 3'-phosphate to a 2',3'-cyclic phosphodiester at the end of RNA. The mechanism of action of the enzyme occurs in 3 steps: (A) adenylation of the enzyme by ATP; (B) transfer of adenylate to an RNA-N3'P to produce RNA-N3'PP5'A; (C) and attack of the adjacent 2'-hydroxyl on the 3'-phosphorus in the diester linkage to produce the cyclic end product. The biological role of this enzyme is unknown but it is likely to function in some aspects of cellular RNA processing. This Saccharolobus islandicus (strain L.S.2.15 / Lassen #1) (Sulfolobus islandicus) protein is RNA 3'-terminal phosphate cyclase.